The sequence spans 139 residues: Mannose-specific lectin (139 aa).

A Bulb-type lectin domain is found at 1 to 109 (DNILYSGETL…ARWATGTNIH (109 aa)). Q26, D28, N30, Y34, D37, K38, W41, A42, N44, Q57, D59, N61, Y65, I72, W73, N76, N83, Q89, D91, N93, Y97, and W102 together coordinate alpha-D-mannopyranose. C29 and C52 are joined by a disulfide.

As to quaternary structure, homotetramer; antiparallel. Detected in bulbs (at protein level).

The protein resides in the secreted. Functionally, mannose-specific lectin. Displays antiviral activity and therefore may contribute to defense against infections. Shows agglutinating activity towards rabbit erythrocytes. In Narcissus tazetta (Cream narcissus), this protein is Mannose-specific lectin.